We begin with the raw amino-acid sequence, 166 residues long: Coiled-coil domain-containing protein 12 (166 aa).

Methionine 1 carries the post-translational modification N-acetylmethionine. Residues methionine 1–glutamate 56 are disordered. The stretch at valine 8–lysine 28 forms a coiled coil. Residues arginine 10–glutamate 56 are compositionally biased toward basic and acidic residues. Position 53 is an N6-acetyllysine (lysine 53). A Glycyl lysine isopeptide (Lys-Gly) (interchain with G-Cter in SUMO2) cross-link involves residue lysine 94. A coiled-coil region spans residues lysine 117–lysine 144. The disordered stretch occupies residues glutamate 147–aspartate 166. Residues serine 149 and serine 165 each carry the phosphoserine modification.

The sequence is that of Coiled-coil domain-containing protein 12 (CCDC12) from Homo sapiens (Human).